The following is a 115-amino-acid chain: Small ribosomal subunit protein uS17 (115 aa).

This sequence belongs to the universal ribosomal protein uS17 family. In terms of assembly, part of the 30S ribosomal subunit.

One of the primary rRNA binding proteins, it binds specifically to the 5'-end of 16S ribosomal RNA. The chain is Small ribosomal subunit protein uS17 from Granulibacter bethesdensis (strain ATCC BAA-1260 / CGDNIH1).